The chain runs to 188 residues: Elongation factor P (188 aa).

An N6-(3,6-diaminohexanoyl)-5-hydroxylysine modification is found at Lys34.

It belongs to the elongation factor P family. Post-translationally, may be beta-lysylated on the epsilon-amino group of Lys-34 by the combined action of EpmA and EpmB, and then hydroxylated on the C5 position of the same residue by EpmC (if this protein is present). Lysylation is critical for the stimulatory effect of EF-P on peptide-bond formation. The lysylation moiety may extend toward the peptidyltransferase center and stabilize the terminal 3-CCA end of the tRNA. Hydroxylation of the C5 position on Lys-34 may allow additional potential stabilizing hydrogen-bond interactions with the P-tRNA.

The protein localises to the cytoplasm. It participates in protein biosynthesis; polypeptide chain elongation. Functionally, involved in peptide bond synthesis. Alleviates ribosome stalling that occurs when 3 or more consecutive Pro residues or the sequence PPG is present in a protein, possibly by augmenting the peptidyl transferase activity of the ribosome. Modification of Lys-34 is required for alleviation. This chain is Elongation factor P, found in Yersinia pseudotuberculosis serotype O:1b (strain IP 31758).